A 66-amino-acid chain; its full sequence is uncharacterized protein (66 aa).

To E.coli YfhJ.

This is an uncharacterized protein from Pseudomonas aeruginosa (strain ATCC 15692 / DSM 22644 / CIP 104116 / JCM 14847 / LMG 12228 / 1C / PRS 101 / PAO1).